The chain runs to 98 residues: Small ribosomal subunit protein uS19 (98 aa).

This sequence belongs to the universal ribosomal protein uS19 family.

Its function is as follows. Protein S19 forms a complex with S13 that binds strongly to the 16S ribosomal RNA. In Chlorobaculum tepidum (strain ATCC 49652 / DSM 12025 / NBRC 103806 / TLS) (Chlorobium tepidum), this protein is Small ribosomal subunit protein uS19.